The following is a 439-amino-acid chain: tRNA-2-methylthio-N(6)-dimethylallyladenosine synthase (439 aa).

The MTTase N-terminal domain occupies Lys2–Lys119. 6 residues coordinate [4Fe-4S] cluster: Cys11, Cys48, Cys82, Cys156, Cys160, and Cys163. Residues Lys142–Ser374 enclose the Radical SAM core domain. A TRAM domain is found at Arg377 to Ile439.

This sequence belongs to the methylthiotransferase family. MiaB subfamily. As to quaternary structure, monomer. [4Fe-4S] cluster is required as a cofactor.

The protein localises to the cytoplasm. The catalysed reaction is N(6)-dimethylallyladenosine(37) in tRNA + (sulfur carrier)-SH + AH2 + 2 S-adenosyl-L-methionine = 2-methylsulfanyl-N(6)-dimethylallyladenosine(37) in tRNA + (sulfur carrier)-H + 5'-deoxyadenosine + L-methionine + A + S-adenosyl-L-homocysteine + 2 H(+). In terms of biological role, catalyzes the methylthiolation of N6-(dimethylallyl)adenosine (i(6)A), leading to the formation of 2-methylthio-N6-(dimethylallyl)adenosine (ms(2)i(6)A) at position 37 in tRNAs that read codons beginning with uridine. In Buchnera aphidicola subsp. Schizaphis graminum (strain Sg), this protein is tRNA-2-methylthio-N(6)-dimethylallyladenosine synthase.